The primary structure comprises 289 residues: Diaminopimelate epimerase (289 aa).

Residues Asn13, Gln47, and Asn67 each coordinate substrate. Cys76 acts as the Proton donor in catalysis. Substrate is bound by residues 77–78 (GN), Asn167, Asn200, and 218–219 (ER). The Proton acceptor role is filled by Cys227. Residue 228–229 (GT) coordinates substrate.

It belongs to the diaminopimelate epimerase family. As to quaternary structure, homodimer.

The protein localises to the cytoplasm. The enzyme catalyses (2S,6S)-2,6-diaminopimelate = meso-2,6-diaminopimelate. It participates in amino-acid biosynthesis; L-lysine biosynthesis via DAP pathway; DL-2,6-diaminopimelate from LL-2,6-diaminopimelate: step 1/1. In terms of biological role, catalyzes the stereoinversion of LL-2,6-diaminopimelate (L,L-DAP) to meso-diaminopimelate (meso-DAP), a precursor of L-lysine and an essential component of the bacterial peptidoglycan. The chain is Diaminopimelate epimerase from Burkholderia thailandensis (strain ATCC 700388 / DSM 13276 / CCUG 48851 / CIP 106301 / E264).